Consider the following 119-residue polypeptide: uncharacterized protein (119 aa).

It localises to the mitochondrion. This is an uncharacterized protein from Arabidopsis thaliana (Mouse-ear cress).